Consider the following 215-residue polypeptide: MKFILLGAPGAGKGTQAQFLTKEFNIPQISTGDMLRAAIKAQTPMGKMAKEFMDAGKLVTDEIIIGLVKDRIAEPDCANGFLLDGFPRTVPQADALKAAGVEIDAVIEIDVPDSEIVNRMAGRRVHPASGRTYHITYNPPKVDDKDNETGDDLIQREDDKAEVVLDRLKVYHEQTAPLIGYYKAEAEKNDQLKYIQVDGTQPIDTVEKSILSALK.

Gly-10 to Thr-15 contributes to the ATP binding site. The tract at residues Ser-30–Val-59 is NMP. AMP contacts are provided by residues Thr-31, Arg-36, Lys-57–Val-59, Gly-85–Arg-88, and Gln-92. The segment at Gly-122–Asp-159 is LID. ATP is bound by residues Arg-123 and Thr-132–Tyr-133. AMP-binding residues include Arg-156 and Arg-167. Gln-201 serves as a coordination point for ATP.

This sequence belongs to the adenylate kinase family. As to quaternary structure, monomer.

It is found in the cytoplasm. It catalyses the reaction AMP + ATP = 2 ADP. Its pathway is purine metabolism; AMP biosynthesis via salvage pathway; AMP from ADP: step 1/1. Functionally, catalyzes the reversible transfer of the terminal phosphate group between ATP and AMP. Plays an important role in cellular energy homeostasis and in adenine nucleotide metabolism. The chain is Adenylate kinase from Hydrogenovibrio crunogenus (strain DSM 25203 / XCL-2) (Thiomicrospira crunogena).